Consider the following 273-residue polypeptide: Putative phosphoenolpyruvate synthase regulatory protein (273 aa).

153-160 (AVSRAGKT) is an ADP binding site.

The protein belongs to the pyruvate, phosphate/water dikinase regulatory protein family. PSRP subfamily.

The catalysed reaction is [pyruvate, water dikinase] + ADP = [pyruvate, water dikinase]-phosphate + AMP + H(+). It catalyses the reaction [pyruvate, water dikinase]-phosphate + phosphate + H(+) = [pyruvate, water dikinase] + diphosphate. Its function is as follows. Bifunctional serine/threonine kinase and phosphorylase involved in the regulation of the phosphoenolpyruvate synthase (PEPS) by catalyzing its phosphorylation/dephosphorylation. The protein is Putative phosphoenolpyruvate synthase regulatory protein of Xanthomonas axonopodis pv. citri (strain 306).